The chain runs to 70 residues: Small, acid-soluble spore protein 1 (70 aa).

Belongs to the alpha/beta-type SASP family.

SASP are bound to spore DNA. They are double-stranded DNA-binding proteins that cause DNA to change to an a-like conformation. They protect the DNA backbone from chemical and enzymatic cleavage and are thus involved in dormant spore's high resistance to UV light. The protein is Small, acid-soluble spore protein 1 (sasP-1) of Geobacillus stearothermophilus (Bacillus stearothermophilus).